Reading from the N-terminus, the 239-residue chain is Ribosomal RNA small subunit methyltransferase G (239 aa).

Residues Gly78, Phe83, 129 to 130, and Arg148 contribute to the S-adenosyl-L-methionine site; that span reads AE.

It belongs to the methyltransferase superfamily. RNA methyltransferase RsmG family.

It is found in the cytoplasm. Functionally, specifically methylates the N7 position of a guanine in 16S rRNA. The sequence is that of Ribosomal RNA small subunit methyltransferase G from Clostridium tetani (strain Massachusetts / E88).